A 204-amino-acid polypeptide reads, in one-letter code: Urease accessory protein UreG (204 aa).

11–18 (GPVGAGKT) serves as a coordination point for GTP.

It belongs to the SIMIBI class G3E GTPase family. UreG subfamily. In terms of assembly, homodimer. UreD, UreF and UreG form a complex that acts as a GTP-hydrolysis-dependent molecular chaperone, activating the urease apoprotein by helping to assemble the nickel containing metallocenter of UreC. The UreE protein probably delivers the nickel.

It localises to the cytoplasm. In terms of biological role, facilitates the functional incorporation of the urease nickel metallocenter. This process requires GTP hydrolysis, probably effectuated by UreG. This Staphylococcus aureus (strain Mu3 / ATCC 700698) protein is Urease accessory protein UreG.